Consider the following 316-residue polypeptide: Pantothenate kinase (316 aa).

95 to 102 (GSVAVGKS) lines the ATP pocket.

The protein belongs to the prokaryotic pantothenate kinase family.

It localises to the cytoplasm. The catalysed reaction is (R)-pantothenate + ATP = (R)-4'-phosphopantothenate + ADP + H(+). It functions in the pathway cofactor biosynthesis; coenzyme A biosynthesis; CoA from (R)-pantothenate: step 1/5. The protein is Pantothenate kinase of Shewanella sp. (strain MR-7).